The following is a 325-amino-acid chain: Glyoxylate/hydroxypyruvate reductase B (325 aa).

Catalysis depends on residues R237 and E266. H285 acts as the Proton donor in catalysis.

The protein belongs to the D-isomer specific 2-hydroxyacid dehydrogenase family. GhrB subfamily. In terms of assembly, homodimer.

The protein localises to the cytoplasm. The enzyme catalyses glycolate + NADP(+) = glyoxylate + NADPH + H(+). It catalyses the reaction (R)-glycerate + NAD(+) = 3-hydroxypyruvate + NADH + H(+). It carries out the reaction (R)-glycerate + NADP(+) = 3-hydroxypyruvate + NADPH + H(+). Its function is as follows. Catalyzes the NADPH-dependent reduction of glyoxylate and hydroxypyruvate into glycolate and glycerate, respectively. In Serratia proteamaculans (strain 568), this protein is Glyoxylate/hydroxypyruvate reductase B.